Reading from the N-terminus, the 205-residue chain is Glycerol-3-phosphate acyltransferase (205 aa).

A run of 4 helical transmembrane segments spans residues 4 to 24 (IAPGMILLAYLCGSISSAILV), 80 to 100 (PFWLGLIAIAACLGHIWPIFF), 112 to 132 (FGAIAPIGWDLTGVMAGTWLL), and 138 to 158 (GYSSLGAIVSALVAPFYVWWF).

This sequence belongs to the PlsY family. Probably interacts with PlsX.

The protein localises to the cell inner membrane. The enzyme catalyses an acyl phosphate + sn-glycerol 3-phosphate = a 1-acyl-sn-glycero-3-phosphate + phosphate. The protein operates within lipid metabolism; phospholipid metabolism. Functionally, catalyzes the transfer of an acyl group from acyl-phosphate (acyl-PO(4)) to glycerol-3-phosphate (G3P) to form lysophosphatidic acid (LPA). This enzyme utilizes acyl-phosphate as fatty acyl donor, but not acyl-CoA or acyl-ACP. The polypeptide is Glycerol-3-phosphate acyltransferase (Cronobacter sakazakii (strain ATCC BAA-894) (Enterobacter sakazakii)).